The following is a 91-amino-acid chain: Transcriptional repressor FrmR (91 aa).

It belongs to the FrmR/RcnR family. Homotetramer.

It localises to the cytoplasm. Functionally, formaldehyde sensor. In the absence of formaldehyde, mediates repression of the frmRAB operon. Acts by binding directly to the frmRAB promoter region. In the presence of formaldehyde, it dissociates from the frmRAB promoter region and allows expression of the formaldehyde detoxification system encoded by frmA and frmB. In Escherichia coli (strain UTI89 / UPEC), this protein is Transcriptional repressor FrmR.